Here is a 420-residue protein sequence, read N- to C-terminus: MTKWKRANPNGTRDYLFEECTLIEEVEQKLRRTFLERGYEEIRTPTIEFYDVFAFQSRPIDEEKMYKFFDEKGRIIVLRPDMTIPLARVVGTQRCDTPLKVTYSGNVFRANESLAGKYNEIVQSGIEVIGIDNVRAEIECVISVIQSLQKLRVQSFTIEIGQVQLYKCIVKKLSIHEEEEKFLRTYIESKNYASLSNFIRDKKLDRCDETVKLLEKLPRLFGNLEVIEEAEKLASSNEMKMAITRVKEIYEAIEKLGYGSYISIDLGTIQHLDYYTGVIFKGYIYEIGEEIVSGGRYDELIGNFGEMLPAVGLAVQVNQIVKALQEQQEPYERKRIDIMIHYELNRLAEAERLRNLLQKDGKKVALSLFSNLNDTFQFARKNQIVTVVEAKSESLVEYVWKEKWVVQKEGETSCVTFKLR.

This sequence belongs to the class-II aminoacyl-tRNA synthetase family. HisZ subfamily. In terms of assembly, heteromultimer composed of HisG and HisZ subunits.

It is found in the cytoplasm. The protein operates within amino-acid biosynthesis; L-histidine biosynthesis; L-histidine from 5-phospho-alpha-D-ribose 1-diphosphate: step 1/9. In terms of biological role, required for the first step of histidine biosynthesis. May allow the feedback regulation of ATP phosphoribosyltransferase activity by histidine. The polypeptide is ATP phosphoribosyltransferase regulatory subunit (Bacillus anthracis (strain A0248)).